The chain runs to 447 residues: Biotin carboxylase (447 aa).

In terms of domain architecture, Biotin carboxylation spans 1 to 447 (MKFDKILIAN…STSFVQEMNK (447 aa)). ATP-binding positions include lysine 117, lysine 159, 165 to 166 (GG), 201 to 204 (EKFI), and histidine 209. Positions 121-318 (KETMQKAGVP…LLVEQIRIAQ (198 aa)) constitute an ATP-grasp domain. Residue lysine 238 coordinates hydrogencarbonate. Residues glutamate 276 and glutamate 289 each contribute to the ATP site. Residues glutamate 276, glutamate 289, and asparagine 291 each contribute to the Mg(2+) site. 3 residues coordinate Mn(2+): glutamate 276, glutamate 289, and asparagine 291. Hydrogencarbonate contacts are provided by arginine 293, valine 296, and arginine 339. The active site involves arginine 293. Arginine 339 contacts biotin.

Acetyl-CoA carboxylase is a heterohexamer of biotin carboxyl carrier protein, biotin carboxylase and the two subunits of carboxyl transferase in a 2:2 complex. The cofactor is Mg(2+). Mn(2+) serves as cofactor.

The catalysed reaction is N(6)-biotinyl-L-lysyl-[protein] + hydrogencarbonate + ATP = N(6)-carboxybiotinyl-L-lysyl-[protein] + ADP + phosphate + H(+). Its pathway is lipid metabolism; malonyl-CoA biosynthesis; malonyl-CoA from acetyl-CoA: step 1/1. Its function is as follows. This protein is a component of the acetyl coenzyme A carboxylase complex; first, biotin carboxylase catalyzes the carboxylation of the carrier protein and then the transcarboxylase transfers the carboxyl group to form malonyl-CoA. The protein is Biotin carboxylase (accC) of Nostoc sp. (strain PCC 7120 / SAG 25.82 / UTEX 2576).